A 46-amino-acid chain; its full sequence is Light-harvesting protein B-800/850 beta 1 chain (46 aa).

Topologically, residues 2–19 are cytoplasmic; sequence AERSLSGLTEEEAIAVHD. Residues H18 and H36 each contribute to the a bacteriochlorophyll site. Residues 20 to 42 traverse the membrane as a helical segment; it reads QFKTTFSAFIILAAVAHVLVWVW. Topologically, residues 43–46 are periplasmic; that stretch reads KPWF.

The protein belongs to the antenna complex beta subunit family. As to quaternary structure, the core complex is formed by different alpha and beta chains, binding bacteriochlorophyll molecules, and arranged most probably in tetrameric structures disposed around the reaction center.

It is found in the cell inner membrane. In terms of biological role, antenna complexes are light-harvesting systems, which transfer the excitation energy to the reaction centers. The polypeptide is Light-harvesting protein B-800/850 beta 1 chain (B1) (Magnetospirillum molischianum (Rhodospirillum molischianum)).